The following is a 423-amino-acid chain: Aspartate--tRNA(Asp) ligase (423 aa).

E163 is an L-aspartate binding site. The aspartate stretch occupies residues 185–188 (QLYK). R207 contacts L-aspartate. Residues 207 to 209 (RAE), 215 to 217 (RHL), and E346 contribute to the ATP site. Mg(2+) contacts are provided by E346 and S349. The L-aspartate site is built by S349 and R353. 394–397 (GLER) serves as a coordination point for ATP.

This sequence belongs to the class-II aminoacyl-tRNA synthetase family. Type 2 subfamily. As to quaternary structure, homodimer. The cofactor is Mg(2+).

The protein resides in the cytoplasm. The enzyme catalyses tRNA(Asp) + L-aspartate + ATP = L-aspartyl-tRNA(Asp) + AMP + diphosphate. In terms of biological role, catalyzes the attachment of L-aspartate to tRNA(Asp) in a two-step reaction: L-aspartate is first activated by ATP to form Asp-AMP and then transferred to the acceptor end of tRNA(Asp). This Picrophilus torridus (strain ATCC 700027 / DSM 9790 / JCM 10055 / NBRC 100828 / KAW 2/3) protein is Aspartate--tRNA(Asp) ligase.